The sequence spans 1390 residues: Hepatocyte growth factor receptor (1390 aa).

Positions 1 to 24 are cleaved as a signal peptide; the sequence is MKAPAVLAPGILVLLFTLVQRSNG. Residues 25–932 are Extracellular-facing; sequence ECKEALAKSE…VIVQPDQNFT (908 aa). The region spanning 27 to 515 is the Sema domain; sequence KEALAKSEMN…TGKKITKIPL (489 aa). A glycan (N-linked (GlcNAc...) asparagine) is linked at asparagine 45. Disulfide bonds link cysteine 95/cysteine 101, cysteine 98/cysteine 160, cysteine 133/cysteine 141, and cysteine 172/cysteine 175. N-linked (GlcNAc...) asparagine glycosylation occurs at asparagine 106. Asparagine 149 carries N-linked (GlcNAc...) asparagine glycosylation. The N-linked (GlcNAc...) asparagine glycan is linked to asparagine 202. Cystine bridges form between cysteine 298–cysteine 363 and cysteine 385–cysteine 397. N-linked (GlcNAc...) asparagine glycosylation is found at asparagine 399 and asparagine 405. Cystine bridges form between cysteine 520–cysteine 538, cysteine 526–cysteine 561, cysteine 529–cysteine 545, and cysteine 541–cysteine 551. 3 IPT/TIG domains span residues 563–655, 657–739, and 742–836; these read PAIY…FSYV, PVIT…FSYR, and PIVY…LIYV. An O-linked (Man) threonine glycan is attached at threonine 582. An N-linked (GlcNAc...) asparagine glycan is attached at asparagine 607. An intrachain disulfide couples cysteine 610 to cysteine 624. Asparagine 635 is a glycosylation site (N-linked (GlcNAc...) asparagine). Threonine 676 carries O-linked (Man) threonine glycosylation. An intrachain disulfide couples cysteine 697 to cysteine 709. O-linked (Man) threonine glycosylation occurs at threonine 761. Residues asparagine 785, asparagine 879, and asparagine 930 are each glycosylated (N-linked (GlcNAc...) asparagine). A helical transmembrane segment spans residues 933-955; the sequence is GLIAGVVSISTALLLLLGFFLWL. The Cytoplasmic portion of the chain corresponds to 956–1390; that stretch reads KKRKQIKDLG…TRPASFWETS (435 aa). Serine 966 carries the phosphoserine modification. Residue threonine 977 is modified to Phosphothreonine. Phosphoserine is present on residues serine 990, serine 997, and serine 1000. Tyrosine 1003 carries the phosphotyrosine modification. One can recognise a Protein kinase domain in the interval 1078 to 1345; sequence VHFNEVIGRG…RISAIFSTFI (268 aa). ATP-binding positions include 1084–1092 and lysine 1110; that span reads IGRGHFGCV. Aspartate 1204 functions as the Proton acceptor in the catalytic mechanism. The tract at residues 1212–1390 is interaction with RANBP9; that stretch reads LDEKFTVKVA…TRPASFWETS (179 aa). A Phosphotyrosine modification is found at tyrosine 1230. Tyrosine 1234 and tyrosine 1235 each carry phosphotyrosine; by autocatalysis. At threonine 1289 the chain carries Phosphothreonine. Positions 1320–1359 are interaction with MUC20; that stretch reads WHPKAEMRPSFSELVSRISAIFSTFIGEHYVHVNATYVNV. Residues tyrosine 1349 and tyrosine 1356 each carry the phosphotyrosine; by autocatalysis modification. Tyrosine 1365 bears the Phosphotyrosine mark.

It belongs to the protein kinase superfamily. Tyr protein kinase family. Heterodimer made of an alpha chain (50 kDa) and a beta chain (145 kDa) which are disulfide linked. Binds PLXNB1. Interacts when phosphorylated with downstream effectors including STAT3, PIK3R1, SRC, PCLG1, GRB2 and GAB1. Interacts with SPSB1, SPSB2 and SPSB4. Interacts with INPP5D/SHIP1. When phosphorylated at Tyr-1356, interacts with INPPL1/SHIP2. Interacts with RANBP9 and RANBP10, as well as SPSB1, SPSB2, SPSB3 and SPSB4. SPSB1 binding occurs in the presence and in the absence of HGF, however HGF treatment has a positive effect on this interaction. Interacts with MUC20; prevents interaction with GRB2 and suppresses hepatocyte growth factor-induced cell proliferation. Interacts with GRB10. Interacts with PTPN1 and PTPN2. Interacts with LECT2; this interaction may have an antagonistic effect on receptor activation. Interacts with HSP90AA1 and HSP90AB1; the interaction suppresses MET kinase activity. Interacts with tensin TNS3. Interacts (when phosphorylated) with tensin TNS4 (via SH2 domain); the interaction increases MET protein stability by inhibiting MET endocytosis and subsequent lysosomal degradation. In terms of assembly, (Microbial infection) Interacts via extracytoplasmic residues 25-656 with L.monocytogenes InlB; MET can bind HGF, its endogenous ligand, and InlB simultaneously. InlB probably dimerizes upon binding to MET, which encourages subsequent dimerization of MET. Post-translationally, autophosphorylated in response to ligand binding on Tyr-1234 and Tyr-1235 in the kinase domain leading to further phosphorylation of Tyr-1349 and Tyr-1356 in the C-terminal multifunctional docking site. Dephosphorylated by PTPRJ at Tyr-1349 and Tyr-1365. Dephosphorylated by PTPN1 and PTPN2. In terms of processing, ubiquitinated. Ubiquitination by CBL regulates MET endocytosis, resulting in decreasing plasma membrane receptor abundance, and in endosomal degradation and/or recycling of internalized receptors. O-mannosylation of IPT/TIG domains by TMEM260 is required for protein maturation. O-mannosylated residues are composed of single mannose glycans that are not elongated or modified. Post-translationally, (Microbial infection) Tyrosine phosphorylation is stimulated by L.monocytogenes InlB. Tyrosine phosphorylation is maximal 10-20 minutes after treatment with InlB and disappears by 60 minutes. The phosphorylated residues were not identified. Expressed in normal hepatocytes as well as in epithelial cells lining the stomach, the small and the large intestine. Found also in basal keratinocytes of esophagus and skin. High levels are found in liver, gastrointestinal tract, thyroid and kidney. Also present in the brain. Expressed in metaphyseal bone (at protein level).

The protein resides in the membrane. It localises to the secreted. It catalyses the reaction L-tyrosyl-[protein] + ATP = O-phospho-L-tyrosyl-[protein] + ADP + H(+). Its activity is regulated as follows. In its inactive state, the C-terminal tail interacts with the catalytic domain and inhibits the kinase activity. Upon ligand binding, the C-terminal tail is displaced and becomes phosphorylated, thus increasing the kinase activity. Receptor tyrosine kinase that transduces signals from the extracellular matrix into the cytoplasm by binding to hepatocyte growth factor/HGF ligand. Regulates many physiological processes including proliferation, scattering, morphogenesis and survival. Ligand binding at the cell surface induces autophosphorylation of MET on its intracellular domain that provides docking sites for downstream signaling molecules. Following activation by ligand, interacts with the PI3-kinase subunit PIK3R1, PLCG1, SRC, GRB2, STAT3 or the adapter GAB1. Recruitment of these downstream effectors by MET leads to the activation of several signaling cascades including the RAS-ERK, PI3 kinase-AKT, or PLCgamma-PKC. The RAS-ERK activation is associated with the morphogenetic effects while PI3K/AKT coordinates prosurvival effects. During embryonic development, MET signaling plays a role in gastrulation, development and migration of neuronal precursors, angiogenesis and kidney formation. During skeletal muscle development, it is crucial for the migration of muscle progenitor cells and for the proliferation of secondary myoblasts. In adults, participates in wound healing as well as organ regeneration and tissue remodeling. Also promotes differentiation and proliferation of hematopoietic cells. May regulate cortical bone osteogenesis. In terms of biological role, (Microbial infection) Acts as a receptor for Listeria monocytogenes internalin InlB, mediating entry of the pathogen into cells. This chain is Hepatocyte growth factor receptor (MET), found in Homo sapiens (Human).